The primary structure comprises 581 residues: UvrABC system protein C (581 aa).

Residues 15 to 94 (REPGVYLFEQ…IKRHRPPYNV (80 aa)) form the GIY-YIG domain. The 36-residue stretch at 202–237 (GVLADPLRREMEAAAQNQEFERAANLRDKLGAVEAL) folds into the UVR domain.

It belongs to the UvrC family. As to quaternary structure, interacts with UvrB in an incision complex.

Its subcellular location is the cytoplasm. Functionally, the UvrABC repair system catalyzes the recognition and processing of DNA lesions. UvrC both incises the 5' and 3' sides of the lesion. The N-terminal half is responsible for the 3' incision and the C-terminal half is responsible for the 5' incision. The chain is UvrABC system protein C from Haloarcula marismortui (strain ATCC 43049 / DSM 3752 / JCM 8966 / VKM B-1809) (Halobacterium marismortui).